The primary structure comprises 1690 residues: Lysine-specific demethylase 5A (1690 aa).

A JmjN domain is found at 19-60 (CPVFEPSWEEFTDPLSFIGRIRPLAEKTGICKIRPPKDWQPP). The 91-residue stretch at 84-174 (TRVRLDFLDQ…ILYPYELFQS (91 aa)) folds into the ARID domain. Lysine 191 participates in a covalent cross-link: Glycyl lysine isopeptide (Lys-Gly) (interchain with G-Cter in SUMO2). At serine 204 the chain carries Phosphoserine. The PHD-type 1 zinc finger occupies 293–343 (LYVCMFCGRGNNEDKLLLCDGCDDSYHTFCLIPPLPDVPKGDWRCPKCVAE). Tyrosine 409 contacts 2-oxoglutarate. The short motif at 419–423 (GSGFP) is the GSGFP motif element. Positions 437–603 (EYALSGWNLN…IGRQCVNHYR (167 aa)) constitute a JmjC domain. Fe cation-binding residues include histidine 483 and glutamate 485. Residues serine 491, asparagine 493, and lysine 501 each coordinate 2-oxoglutarate. Position 571 (histidine 571) interacts with Fe cation. The segment at 676 to 728 (CSACRTTCFLSALTCSCNPERLVCLYHPTDLCPCPMQKKCLRYRYPLEDLPSL) adopts a C5HC2 zinc-finger fold. A Glycyl lysine isopeptide (Lys-Gly) (interchain with G-Cter in SUMO2) cross-link involves residue lysine 1007. Serine 1111 is modified (phosphoserine). The PHD-type 2 zinc-finger motif lies at 1161–1218 (VKFCICRKTASGFMLQCELCKDWFHNSCVPLPKSSSQKKGSSWQAKEVKFLCPLCMRS). Disordered regions lie at residues 1327 to 1348 (SVSS…SDED) and 1407 to 1433 (KSCS…LEPP). Phosphoserine is present on residues serine 1330 and serine 1331. Residues 1337 to 1348 (DYDDEETDSDED) show a composition bias toward acidic residues. Threonine 1343 carries the phosphothreonine modification. Residue serine 1345 is modified to Phosphoserine. Phosphoserine occurs at positions 1438 and 1488. Basic and acidic residues-rich tracts occupy residues 1490-1503 (EEKP…DSSE) and 1520-1530 (GKQKSKELKKM). Disordered stretches follow at residues 1490–1509 (EEKP…RKRK) and 1516–1543 (LFGE…LGAD). Tyrosine 1595 is subject to Phosphotyrosine. Serine 1598 and serine 1603 each carry phosphoserine. The segment at 1607–1661 (NAVCAAQNCQRPCKDKVDWVQCDGGCDEWFHQVCVGVSPEMAENEDYICINCAKK) adopts a PHD-type 3 zinc-finger fold. An interaction with LMO2 region spans residues 1623-1690 (VDWVQCDGGC…LPMEDLKETS (68 aa)). Serine 1666 is subject to Phosphoserine.

This sequence belongs to the JARID1 histone demethylase family. As to quaternary structure, interacts with SUZ12; the interaction is direct. Interacts with the viral protein-binding domain of RB1. Interacts with ESR1, MYC, MYCN and LMO2. Interacts with HDAC1; this interaction impairs histone deacetylation by HDAC1. Interacts with BMAL1 and CLOCK. Interacts (via PHD-type 1 zinc finger) with histone H3 unmodified at 'Lys-4' and (via PHD-type 3 zinc finger) with histone H3 di- and trimethylated at 'Lys-4'. Fe(2+) serves as cofactor.

The protein resides in the nucleus. It localises to the nucleolus. It catalyses the reaction N(6),N(6),N(6)-trimethyl-L-lysyl(4)-[histone H3] + 3 2-oxoglutarate + 3 O2 = L-lysyl(4)-[histone H3] + 3 formaldehyde + 3 succinate + 3 CO2. The inhibitors KDOAM-25, CPI-455 and others inhibits its demethylase activity, resulting to cell growth arrest in cancer cells. Functionally, histone demethylase that specifically demethylates 'Lys-4' of histone H3, thereby playing a central role in histone code. Does not demethylate histone H3 'Lys-9', H3 'Lys-27', H3 'Lys-36', H3 'Lys-79' or H4 'Lys-20'. Demethylates trimethylated and dimethylated but not monomethylated H3 'Lys-4'. Regulates specific gene transcription through DNA-binding on 5'-CCGCCC-3' motif. May stimulate transcription mediated by nuclear receptors. Involved in transcriptional regulation of Hox proteins during cell differentiation. May participate in transcriptional repression of cytokines such as CXCL12. Plays a role in the regulation of the circadian rhythm and in maintaining the normal periodicity of the circadian clock. In a histone demethylase-independent manner, acts as a coactivator of the CLOCK-BMAL1-mediated transcriptional activation of PER1/2 and other clock-controlled genes and increases histone acetylation at PER1/2 promoters by inhibiting the activity of HDAC1. Seems to act as a transcriptional corepressor for some genes such as MT1F and to favor the proliferation of cancer cells. This is Lysine-specific demethylase 5A from Homo sapiens (Human).